Reading from the N-terminus, the 37-residue chain is uncharacterized protein (37 aa).

A helical transmembrane segment spans residues 17–37 (TFVLIVVLFILLIIVGAAFIC).

The protein belongs to the SscA family.

Its subcellular location is the membrane. This is an uncharacterized protein from Bacillus subtilis (strain 168).